The sequence spans 737 residues: MPEATEHPPIGEAQTEPAQSGCPMVIKPPVEGGSNRDWWPNAVNLKMLQKDPEVIDPIDEGYDYREAVQTLDVDQLARDFDELCTNSQDWWPADFGHYGPLFIRMSWHAAGTYRVQDGRGGAGKGMQRFAPLNSWPDNVSLDKARRLLWPLKKKYGKKLSWSDLIVYAGNRAMENMGFKTAGFAFGRPDYWEPEEDVYWGAEHEWLGSQDRYAGANGDRTKLENPLGASHMGLIYVNPEGPEGNPDPIAAAIDIRETFGRMAMNDVETAALIVGGHTFGKTHGATDIVNGPEPEAAPLEQMGLGWSNPGVGIDTVSSGLEVTWTHTPTKWDNSFLEILYGNEWELFKSPAGANQWRPKDNGWADSVPMAQGTGKTHPAMLTTDLSMRMDPIYGEITRRWLDHPEELAEEYAKAWFKLLHRDMGPVQRYLGPLVPTQTWLWQDIVPAGKPLSDADVATLKGAIADSGLTVQQLVSTAWKAASSFRISDMRGGANGGRIRLQPQLGWESNEPDELAQVISKLEEIQGSSGIDVSFADLVVLGGNVGIETAAKAAGFDIEVPFSSGRGDATQEQTDVEAFSYLEPKADGFRNYVGKGLNLPAEYQLIDQANLLNLSAPQMTVLIGGLRALGITHGDSKLGVLTDTPGQLTNDYFVNLTDMGVKWAPAPADDGTYVGTDRDTGEVKYTASRVDLLFGSNSQLRALAEVYAEDDSRDKFVKDFVAAWVNVMDADRYDIGKGA.

A disordered region spans residues methionine 1–glycine 33. The segment at residues tryptophan 107 to tyrosine 235 is a cross-link (tryptophyl-tyrosyl-methioninium (Trp-Tyr) (with M-261)). Histidine 108 functions as the Proton acceptor in the catalytic mechanism. Residues tyrosine 235 to methionine 261 constitute a cross-link (tryptophyl-tyrosyl-methioninium (Tyr-Met) (with W-107)). Position 276 (histidine 276) interacts with heme.

Belongs to the peroxidase family. Peroxidase/catalase subfamily. In terms of assembly, homodimer or homotetramer. Heme b serves as cofactor. In terms of processing, formation of the three residue Trp-Tyr-Met cross-link is important for the catalase, but not the peroxidase activity of the enzyme.

It carries out the reaction H2O2 + AH2 = A + 2 H2O. The enzyme catalyses 2 H2O2 = O2 + 2 H2O. Functionally, bifunctional enzyme with both catalase and broad-spectrum peroxidase activity. May play a role in polycyclic aromatic hydrocarbon (PAH) metabolism. This Mycolicibacterium vanbaalenii (Mycobacterium vanbaalenii) protein is Catalase-peroxidase.